Reading from the N-terminus, the 436-residue chain is UPF0597 protein YhaM (436 aa).

Belongs to the UPF0597 family.

This Escherichia coli O139:H28 (strain E24377A / ETEC) protein is UPF0597 protein YhaM.